A 1231-amino-acid chain; its full sequence is ATP-dependent RNA helicase DHX30 (1231 aa).

Positions 39-65 are disordered; it reads PDGLEGARQEDEEEQPPPPGAEEQSTA. DRBM domains follow at residues 80 to 148 and 292 to 359; these read PKNL…CQLF and PKNL…CQKL. The Helicase ATP-binding domain maps to 488–656; it reads LSAIEQNPVV…FGGCPVVKVP (169 aa). Residue 501–508 coordinates ATP; it reads GDTGCGKT. Residues 603–606 carry the DEAH box motif; it reads DEVH. Positions 697 to 870 constitute a Helicase C-terminal domain; that stretch reads LITDLVLQID…NLVVQAKIHM (174 aa).

This sequence belongs to the DEAD box helicase family. DEAH subfamily.

The protein resides in the cytoplasm. It localises to the mitochondrion. The protein localises to the mitochondrion matrix. Its subcellular location is the mitochondrion nucleoid. It catalyses the reaction ATP + H2O = ADP + phosphate + H(+). Functionally, RNA-dependent helicase. Plays an important role in the assembly of the mitochondrial large ribosomal subunit. Required for optimal function of the zinc-finger antiviral protein ZC3HAV1. Associates with mitochondrial DNA. Involved in nervous system development and differentiation through its involvement in the up-regulation of a number of genes which are required for neurogenesis, including GSC, NCAM1, neurogenin, and NEUROD. The sequence is that of ATP-dependent RNA helicase DHX30 (DHX30) from Gallus gallus (Chicken).